Consider the following 221-residue polypeptide: MSGVFIVFEGIDGAGKTTQLAYLHEALLSMRNHRVLVTREPGGTRIGEAVRRVLLDTGNSEMTGETEALLYAAARSQFTAEVVRPALARGEIVLSDRFLDSSLAYQGFGRGLELHRLRQVNFLATGGLRPDLTVLLDLPVAAAVARMDPDRRDRLEREGVDFFERVRRGYLELASADPGHYLIVNAEREAGVCASAIWARVRALLQDRPTFGGCPGLDGGS.

Residue 10–17 coordinates ATP; that stretch reads GIDGAGKT.

This sequence belongs to the thymidylate kinase family.

The enzyme catalyses dTMP + ATP = dTDP + ADP. Functionally, phosphorylation of dTMP to form dTDP in both de novo and salvage pathways of dTTP synthesis. The chain is Thymidylate kinase from Desulforudis audaxviator (strain MP104C).